The primary structure comprises 337 residues: Holliday junction branch migration complex subunit RuvB (337 aa).

The disordered stretch occupies residues 1–27; that stretch reads MIEADRLVHAQPQGTEERDEQIDRAMR. The large ATPase domain (RuvB-L) stretch occupies residues 4–187; the sequence is ADRLVHAQPQ…FGIPLRLEFY (184 aa). ATP-binding positions include Arg-27, Gly-68, Lys-71, Thr-72, Thr-73, 134-136, Arg-177, Tyr-187, and Arg-224; that span reads EDY. A Mg(2+)-binding site is contributed by Thr-72. Residues 188–258 form a small ATPAse domain (RuvB-S) region; it reads NVKDLSSIVT…VAESALDMLD (71 aa). The tract at residues 261-337 is head domain (RuvB-H); it reads VEGFDYMDRK…YQHFNLIQPE (77 aa). DNA is bound by residues Arg-297, Arg-316, and Arg-321.

This sequence belongs to the RuvB family. As to quaternary structure, homohexamer. Forms an RuvA(8)-RuvB(12)-Holliday junction (HJ) complex. HJ DNA is sandwiched between 2 RuvA tetramers; dsDNA enters through RuvA and exits via RuvB. An RuvB hexamer assembles on each DNA strand where it exits the tetramer. Each RuvB hexamer is contacted by two RuvA subunits (via domain III) on 2 adjacent RuvB subunits; this complex drives branch migration. In the full resolvosome a probable DNA-RuvA(4)-RuvB(12)-RuvC(2) complex forms which resolves the HJ.

The protein localises to the cytoplasm. The enzyme catalyses ATP + H2O = ADP + phosphate + H(+). In terms of biological role, the RuvA-RuvB-RuvC complex processes Holliday junction (HJ) DNA during genetic recombination and DNA repair, while the RuvA-RuvB complex plays an important role in the rescue of blocked DNA replication forks via replication fork reversal (RFR). RuvA specifically binds to HJ cruciform DNA, conferring on it an open structure. The RuvB hexamer acts as an ATP-dependent pump, pulling dsDNA into and through the RuvAB complex. RuvB forms 2 homohexamers on either side of HJ DNA bound by 1 or 2 RuvA tetramers; 4 subunits per hexamer contact DNA at a time. Coordinated motions by a converter formed by DNA-disengaged RuvB subunits stimulates ATP hydrolysis and nucleotide exchange. Immobilization of the converter enables RuvB to convert the ATP-contained energy into a lever motion, pulling 2 nucleotides of DNA out of the RuvA tetramer per ATP hydrolyzed, thus driving DNA branch migration. The RuvB motors rotate together with the DNA substrate, which together with the progressing nucleotide cycle form the mechanistic basis for DNA recombination by continuous HJ branch migration. Branch migration allows RuvC to scan DNA until it finds its consensus sequence, where it cleaves and resolves cruciform DNA. In Shewanella loihica (strain ATCC BAA-1088 / PV-4), this protein is Holliday junction branch migration complex subunit RuvB.